The primary structure comprises 837 residues: Anaphase-promoting complex subunit 2 (837 aa).

5 positions are modified to phosphoserine: serine 233, serine 329, serine 485, serine 549, and serine 712. A disordered region spans residues 478 to 508; the sequence is CLETGQDSEDDSGEPEDWVPDPVDADPVKSS. Acidic residues predominate over residues 483–496; the sequence is QDSEDDSGEPEDWV. The residue at position 825 (tyrosine 825) is a Phosphotyrosine.

The protein belongs to the cullin family. As to quaternary structure, the mammalian APC/C is composed at least of 14 distinct subunits ANAPC1, ANAPC2, CDC27/APC3, ANAPC4, ANAPC5, CDC16/APC6, ANAPC7, CDC23/APC8, ANAPC10, ANAPC11, CDC26/APC12, ANAPC13, ANAPC15 and ANAPC16 that assemble into a complex of at least 19 chains with a combined molecular mass of around 1.2 MDa; APC/C interacts with FZR1 and FBXO5. In the context of the APC/C complex, directly interacts with UBE2C and UBE2S. Interacts (via cullin domain) with ANAPC11 and with UBCH10. Interacts with NEUROD2. Interacts with FBXO43; the interaction is direct.

The protein operates within protein modification; protein ubiquitination. In terms of biological role, together with the RING-H2 protein ANAPC11, constitutes the catalytic component of the anaphase promoting complex/cyclosome (APC/C), a cell cycle-regulated E3 ubiquitin ligase that controls progression through mitosis and the G1 phase of the cell cycle. The APC/C complex acts by mediating ubiquitination and subsequent degradation of target proteins: it mainly mediates the formation of 'Lys-11'-linked polyubiquitin chains and, to a lower extent, the formation of 'Lys-48'- and 'Lys-63'-linked polyubiquitin chains. The APC/C complex catalyzes assembly of branched 'Lys-11'-/'Lys-48'-linked branched ubiquitin chains on target proteins. The CDC20-APC/C complex positively regulates the formation of synaptic vesicle clustering at active zone to the presynaptic membrane in postmitotic neurons. CDC20-APC/C-induced degradation of NEUROD2 drives presynaptic differentiation. This chain is Anaphase-promoting complex subunit 2 (Anapc2), found in Mus musculus (Mouse).